The primary structure comprises 430 residues: Glutamate-1-semialdehyde 2,1-aminomutase (430 aa).

An N6-(pyridoxal phosphate)lysine modification is found at Lys265.

This sequence belongs to the class-III pyridoxal-phosphate-dependent aminotransferase family. HemL subfamily. Homodimer. Pyridoxal 5'-phosphate is required as a cofactor.

It localises to the cytoplasm. The catalysed reaction is (S)-4-amino-5-oxopentanoate = 5-aminolevulinate. The protein operates within porphyrin-containing compound metabolism; protoporphyrin-IX biosynthesis; 5-aminolevulinate from L-glutamyl-tRNA(Glu): step 2/2. The sequence is that of Glutamate-1-semialdehyde 2,1-aminomutase from Shewanella baltica (strain OS195).